We begin with the raw amino-acid sequence, 456 residues long: Phosphomannomutase (456 aa).

The Phosphoserine intermediate role is filled by Ser98. Residues Ser98, Asp245, Asp247, and Asp249 each coordinate Mg(2+).

Belongs to the phosphohexose mutase family. The cofactor is Mg(2+).

The catalysed reaction is alpha-D-mannose 1-phosphate = D-mannose 6-phosphate. It participates in nucleotide-sugar biosynthesis; GDP-alpha-D-mannose biosynthesis; alpha-D-mannose 1-phosphate from D-fructose 6-phosphate: step 2/2. The protein operates within bacterial outer membrane biogenesis; LPS O-antigen biosynthesis. In terms of biological role, involved in GDP-mannose biosynthesis which serves as the activated sugar nucleotide precursor for mannose residues in cell surface polysaccharides. This enzyme participates in synthesis of the LPS O antigen. The sequence is that of Phosphomannomutase (manB) from Salmonella montevideo.